Here is a 251-residue protein sequence, read N- to C-terminus: Flap endonuclease Xni (251 aa).

Asp-104 contacts Mg(2+). One can recognise a 5'-3' exonuclease domain in the interval 160-249; sequence VLPRQLPDYW…IDGNLQQLRL (90 aa). K(+) contacts are provided by Leu-171, Ala-172, Pro-180, Val-182, and Ile-185. Positions 184-189 are interaction with DNA; that stretch reads GIGPKS.

This sequence belongs to the Xni family. Mg(2+) serves as cofactor. Requires K(+) as cofactor.

Functionally, has flap endonuclease activity. During DNA replication, flap endonucleases cleave the 5'-overhanging flap structure that is generated by displacement synthesis when DNA polymerase encounters the 5'-end of a downstream Okazaki fragment. This chain is Flap endonuclease Xni, found in Salmonella schwarzengrund (strain CVM19633).